The following is a 274-amino-acid chain: Endonuclease 8-like L720 (274 aa).

Residues 241–274 form an FPG-type; degenerate zinc finger; the sequence is RIYRKSLCPLGHKTIRKKIGLRNRMTTWCPVCQL.

Belongs to the FPG family.

The protein is Endonuclease 8-like L720 of Acanthamoeba polyphaga mimivirus (APMV).